The chain runs to 453 residues: Chromosomal replication initiator protein DnaA (453 aa).

The tract at residues 1-73 is domain I, interacts with DnaA modulators; that stretch reads MSKEEIWDKV…ADLIEKAIGT (73 aa). The domain II stretch occupies residues 73 to 114; sequence TKLMPNFVIQEDLTEDKQVKDSAKAKSEAKPDVQAPQNSSED. Residues 91 to 103 show a composition bias toward basic and acidic residues; the sequence is VKDSAKAKSEAKP. Residues 91 to 113 form a disordered region; that stretch reads VKDSAKAKSEAKPDVQAPQNSSE. The interval 115–331 is domain III, AAA+ region; it reads QFNVHNTFET…GALTRVIAYS (217 aa). The ATP site is built by Gly-159, Gly-161, Lys-162, and Thr-163. The domain IV, binds dsDNA stretch occupies residues 332–453; that stretch reads RLQNEAITTE…ENLEKEIRNQ (122 aa).

The protein belongs to the DnaA family. Oligomerizes as a right-handed, spiral filament on DNA at oriC.

Its subcellular location is the cytoplasm. Plays an essential role in the initiation and regulation of chromosomal replication. ATP-DnaA binds to the origin of replication (oriC) to initiate formation of the DNA replication initiation complex once per cell cycle. Binds the DnaA box (a 9 base pair repeat at the origin) and separates the double-stranded (ds)DNA. Forms a right-handed helical filament on oriC DNA; dsDNA binds to the exterior of the filament while single-stranded (ss)DNA is stabiized in the filament's interior. The ATP-DnaA-oriC complex binds and stabilizes one strand of the AT-rich DNA unwinding element (DUE), permitting loading of DNA polymerase. After initiation quickly degrades to an ADP-DnaA complex that is not apt for DNA replication. Binds acidic phospholipids. The sequence is that of Chromosomal replication initiator protein DnaA from Staphylococcus carnosus (strain TM300).